Here is a 156-residue protein sequence, read N- to C-terminus: 6,7-dimethyl-8-ribityllumazine synthase (156 aa).

5-amino-6-(D-ribitylamino)uracil contacts are provided by residues Phe22, Ala57–Glu59, and Thr81–Ile83. Residue Gly86 to Thr87 coordinates (2S)-2-hydroxy-3-oxobutyl phosphate. His89 (proton donor) is an active-site residue. Residue Phe114 coordinates 5-amino-6-(D-ribitylamino)uracil. Arg128 contributes to the (2S)-2-hydroxy-3-oxobutyl phosphate binding site.

Belongs to the DMRL synthase family. Forms an icosahedral capsid composed of 60 subunits, arranged as a dodecamer of pentamers.

The enzyme catalyses (2S)-2-hydroxy-3-oxobutyl phosphate + 5-amino-6-(D-ribitylamino)uracil = 6,7-dimethyl-8-(1-D-ribityl)lumazine + phosphate + 2 H2O + H(+). It participates in cofactor biosynthesis; riboflavin biosynthesis; riboflavin from 2-hydroxy-3-oxobutyl phosphate and 5-amino-6-(D-ribitylamino)uracil: step 1/2. Catalyzes the formation of 6,7-dimethyl-8-ribityllumazine by condensation of 5-amino-6-(D-ribitylamino)uracil with 3,4-dihydroxy-2-butanone 4-phosphate. This is the penultimate step in the biosynthesis of riboflavin. The polypeptide is 6,7-dimethyl-8-ribityllumazine synthase (Salmonella agona (strain SL483)).